The primary structure comprises 680 residues: MMRVSQLQLCRTSLSYRLRSGYHHHHHLHHSFFKLIKRNSILESPPTNASHQSPSPITPMVNARVMFFSTSTSAPHPEKINRTSSENILRMISSYLWMKDNPKLCFRVISAFACLVGAKFLNVQVPFLFKVAIDWLSSSSFVDSNPYLVAAFATPSSVLIGYGIARSGSSAFNELRTSVFSKVALRTIRTISRKVLSRLHDLDLRYHLNRDTGALNRIIDRGSRAINTILSAMVFNIMPTILEISMVSCILAYKFGAVYALITCLSVGSYIAFTLAMTQWRIKIRKAMNEAENDASTRAIDSLINYETVKYFNNEDYEARKYDQLHENYEDAALQSRKSFALLNFGQSFIFSTALSTAMVLCSQGIMNGQMTVGDLVMVNGLLFQLSLPLYFLGVVYSDTVQGLVDMKSMFKFLEERSDIGDKDIDRKLPPLVLKGGSISFENVHFSYLPERKILDGISFEVPAGKSVAIVGSSGSGKSTILRMIFRFFDVDSGNVKIDGQDIKEVRLESLRSSIGVVPQDTVLFNDTIFHNIHYGNLSATEEEVYNAARRAAIHDTIMKFPDKYSTAVGERGLMLSGGEKQRVALARAFLKSPAILLCDEATSALDSKTEAEIMKTLRSLASNRTCIFIAHRLTTAMQCDEILVMEKGKVVEKGTHEVLLGKSGRYAKLWTQQNSKLEV.

The transit peptide at 1 to 75 (MMRVSQLQLC…MFFSTSTSAP (75 aa)) directs the protein to the mitochondrion. The region spanning 108 to 402 (VISAFACLVG…LGVVYSDTVQ (295 aa)) is the ABC transmembrane type-1 domain. The next 6 membrane-spanning stretches (helical) occupy residues 109–129 (ISAF…PFLF), 145–165 (NPYL…YGIA), 232–252 (AMVF…CILA), 255–275 (FGAV…AFTL), 340–360 (FALL…TAMV), and 376–396 (LVMV…LGVV). An ABC transporter domain is found at 439–673 (ISFENVHFSY…SGRYAKLWTQ (235 aa)). Residues Tyr448 and 472–483 (GSSGSGKSTILR) contribute to the ATP site.

Belongs to the ABC transporter superfamily. ABCB family. Heavy Metal importer (TC 3.A.1.210) subfamily. Homodimer. As to expression, mostly expressed at low levels in roots and flowers.

It is found in the mitochondrion inner membrane. Performs an essential function in the generation of cytoplasmic iron-sulfur proteins by mediating export of Fe/S cluster precursors synthesized by NFS1 and other mitochondrial proteins. Not involved in the export of cyclic pyranopterin monophosphate (cPMP) from mitochondria to the cytosol. The protein is ABC transporter B family member 24, mitochondrial (ABCB24) of Arabidopsis thaliana (Mouse-ear cress).